Consider the following 460-residue polypeptide: Nuclear distribution protein PAC1-1 (460 aa).

The LisH domain occupies 9–41 (QADELHRALIAYLTAANLPNTAAALREELNLGE). Residues 74-96 (LVTQIMDLESRNHILQSELDNAT) are a coiled coil. Over residues 90–100 (SELDNATPTSR) the composition is skewed to polar residues. The disordered stretch occupies residues 90 to 115 (SELDNATPTSRQNKDPVAWLPRAPPR). WD repeat units follow at residues 120-161 (SHRD…RTIK), 163-203 (HTKA…KNIR), 207-247 (GHDH…CVKT), 250-289 (GHAE…PEPR), 294-354 (GHEH…KTLA), 355-394 (GHDN…KCVK), 399-439 (AHGH…VTPD), and 441-460 (QIRC…IFAN).

This sequence belongs to the WD repeat LIS1/nudF family. In terms of assembly, self-associates. Interacts with NDL1 and dynein.

The protein localises to the cytoplasm. The protein resides in the cytoskeleton. It is found in the spindle pole. Its function is as follows. Positively regulates the activity of the minus-end directed microtubule motor protein dynein. May enhance dynein-mediated microtubule sliding by targeting dynein to the microtubule plus end. Required for nuclear migration during vegetative growth as well as development. Required for retrograde early endosome (EE) transport from the hyphal tip. Required for localization of dynein to the mitotic spindle poles. Recruits additional proteins to the dynein complex at SPBs. This chain is Nuclear distribution protein PAC1-1, found in Sordaria macrospora (strain ATCC MYA-333 / DSM 997 / K(L3346) / K-hell).